Consider the following 681-residue polypeptide: Chaperone protein htpG (681 aa).

An a; substrate-binding region spans residues 1–326; it reads MQKGNIGVTT…SPDIPLNVSR (326 aa). The segment at 327–545 is b; sequence SYLQSDSNVK…YMRRMKEMAN (219 aa). Residues 546-681 form a c region; that stretch reads IQAGMSFYGE…NFVKRSIELI (136 aa). The tract at residues 601 to 620 is disordered; the sequence is DALKKKQEGKKDEDIPTAEK.

This sequence belongs to the heat shock protein 90 family. As to quaternary structure, homodimer.

Its subcellular location is the cytoplasm. Molecular chaperone. Has ATPase activity. This Bacteroides fragilis (strain 638R) protein is Chaperone protein htpG.